Reading from the N-terminus, the 96-residue chain is UPF0235 protein Tola_0962 (96 aa).

It belongs to the UPF0235 family.

The chain is UPF0235 protein Tola_0962 from Tolumonas auensis (strain DSM 9187 / NBRC 110442 / TA 4).